Consider the following 147-residue polypeptide: Protein-export protein SecB 2 (147 aa).

This sequence belongs to the SecB family. As to quaternary structure, homotetramer, a dimer of dimers. One homotetramer interacts with 1 SecA dimer.

It is found in the cytoplasm. Functionally, one of the proteins required for the normal export of preproteins out of the cell cytoplasm. It is a molecular chaperone that binds to a subset of precursor proteins, maintaining them in a translocation-competent state. It also specifically binds to its receptor SecA. The polypeptide is Protein-export protein SecB 2 (Francisella tularensis subsp. novicida (strain U112)).